Reading from the N-terminus, the 109-residue chain is Nucleoid-associated protein A1S_1684 (109 aa).

This sequence belongs to the YbaB/EbfC family. In terms of assembly, homodimer.

The protein localises to the cytoplasm. It is found in the nucleoid. In terms of biological role, binds to DNA and alters its conformation. May be involved in regulation of gene expression, nucleoid organization and DNA protection. In Acinetobacter baumannii (strain ATCC 17978 / DSM 105126 / CIP 53.77 / LMG 1025 / NCDC KC755 / 5377), this protein is Nucleoid-associated protein A1S_1684.